The primary structure comprises 156 residues: Histone H2B.2 (156 aa).

Basic and acidic residues-rich tracts occupy residues 1-10 (MAPKKDEKPA) and 24-58 (AKAE…GEKK). Positions 1-63 (MAPKKDEKPA…DGEKKDKKKK (63 aa)) are disordered. N6-acetyllysine is present on residues Lys-40 and Lys-41. A Glycyl lysine isopeptide (Lys-Gly) (interchain with G-Cter in ubiquitin) cross-link involves residue Lys-152.

This sequence belongs to the histone H2B family. The nucleosome is a histone octamer containing two molecules each of H2A, H2B, H3 and H4 assembled in one H3-H4 heterotetramer and two H2A-H2B heterodimers. The octamer wraps approximately 147 bp of DNA. The N-terminus is blocked. In terms of processing, can be acetylated to form H2BK33ac and H2BK34ac. Acetylated mainly on the ubiquitinated form. Post-translationally, monoubiquitinated to form H2BK143ub1; which is increased during the light period and may give a specific tag for epigenetic transcriptional activation.

The protein localises to the nucleus. Its subcellular location is the chromosome. Core component of nucleosome. Nucleosomes wrap and compact DNA into chromatin, limiting DNA accessibility to the cellular machineries which require DNA as a template. Histones thereby play a central role in transcription regulation, DNA repair, DNA replication and chromosomal stability. DNA accessibility is regulated via a complex set of post-translational modifications of histones, also called histone code, and nucleosome remodeling. The chain is Histone H2B.2 from Chlamydomonas reinhardtii (Chlamydomonas smithii).